The primary structure comprises 421 residues: Gamma-glutamyl phosphate reductase (421 aa).

This sequence belongs to the gamma-glutamyl phosphate reductase family.

It localises to the cytoplasm. The enzyme catalyses L-glutamate 5-semialdehyde + phosphate + NADP(+) = L-glutamyl 5-phosphate + NADPH + H(+). The protein operates within amino-acid biosynthesis; L-proline biosynthesis; L-glutamate 5-semialdehyde from L-glutamate: step 2/2. Catalyzes the NADPH-dependent reduction of L-glutamate 5-phosphate into L-glutamate 5-semialdehyde and phosphate. The product spontaneously undergoes cyclization to form 1-pyrroline-5-carboxylate. This Pseudomonas fluorescens (strain SBW25) protein is Gamma-glutamyl phosphate reductase.